We begin with the raw amino-acid sequence, 252 residues long: tRNA (guanine-N(1)-)-methyltransferase (252 aa).

Residues Gly113 and 133–138 contribute to the S-adenosyl-L-methionine site; that span reads LGDYVL.

It belongs to the RNA methyltransferase TrmD family. Homodimer.

The protein resides in the cytoplasm. The enzyme catalyses guanosine(37) in tRNA + S-adenosyl-L-methionine = N(1)-methylguanosine(37) in tRNA + S-adenosyl-L-homocysteine + H(+). Specifically methylates guanosine-37 in various tRNAs. This is tRNA (guanine-N(1)-)-methyltransferase from Stenotrophomonas maltophilia (strain K279a).